Here is a 153-residue protein sequence, read N- to C-terminus: Ribonuclease VapC6 (153 aa).

A PINc domain is found at Val6–Lys152. The Mg(2+) site is built by Asp9 and Asp120.

The protein belongs to the PINc/VapC protein family. Mg(2+) serves as cofactor.

Toxic component of a type II toxin-antitoxin (TA) system. An RNase. The sequence is that of Ribonuclease VapC6 from Methanocaldococcus jannaschii (strain ATCC 43067 / DSM 2661 / JAL-1 / JCM 10045 / NBRC 100440) (Methanococcus jannaschii).